A 190-amino-acid polypeptide reads, in one-letter code: Xanthine phosphoribosyltransferase (190 aa).

Positions 20 and 27 each coordinate xanthine. Residue 127-131 (AYGNA) participates in 5-phospho-alpha-D-ribose 1-diphosphate binding. Lys-155 contributes to the xanthine binding site.

It belongs to the purine/pyrimidine phosphoribosyltransferase family. Xpt subfamily. In terms of assembly, homodimer.

The protein resides in the cytoplasm. It carries out the reaction XMP + diphosphate = xanthine + 5-phospho-alpha-D-ribose 1-diphosphate. The protein operates within purine metabolism; XMP biosynthesis via salvage pathway; XMP from xanthine: step 1/1. In terms of biological role, converts the preformed base xanthine, a product of nucleic acid breakdown, to xanthosine 5'-monophosphate (XMP), so it can be reused for RNA or DNA synthesis. The chain is Xanthine phosphoribosyltransferase from Bacteroides thetaiotaomicron (strain ATCC 29148 / DSM 2079 / JCM 5827 / CCUG 10774 / NCTC 10582 / VPI-5482 / E50).